Here is a 469-residue protein sequence, read N- to C-terminus: Cytosolic Fe-S cluster assembly factor NAR1 (469 aa).

Residues Cys-20, Cys-56, Cys-59, Cys-62, Cys-168, Cys-215, Cys-394, and Cys-398 each contribute to the [4Fe-4S] cluster site.

Belongs to the NARF family.

Functionally, component of the cytosolic Fe/S protein assembly machinery. Required for maturation of extramitochondrial Fe/S proteins. May play a role in the transfer of pre-assembled Fe/S clusters to target apoproteins. This Kluyveromyces lactis (strain ATCC 8585 / CBS 2359 / DSM 70799 / NBRC 1267 / NRRL Y-1140 / WM37) (Yeast) protein is Cytosolic Fe-S cluster assembly factor NAR1 (NAR1).